Here is a 779-residue protein sequence, read N- to C-terminus: Transcription factor SPT20 homolog (779 aa).

Position 296 is a phosphoserine (S296). 2 disordered regions span residues 373 to 392 and 420 to 507; these read DEES…DHSN and PVKM…IPRK. Residues 424–437 show a composition bias toward low complexity; it reads SHSSSGSASLSQVS. The segment covering 445-454 has biased composition (polar residues); the sequence is TETVSVQSSV. The segment covering 470–479 has biased composition (low complexity); it reads SSSGNSSSGN. Phosphothreonine is present on T494. Phosphoserine occurs at positions 519 and 524. Disordered regions lie at residues 641–677 and 755–779; these read QLSQ…EQAL and LHHH…TPKF. Over residues 755 to 771 the composition is skewed to basic residues; sequence LHHHRHTGSQSKSKMKR.

This sequence belongs to the SPT20 family. In terms of assembly, interacts with MAPK14. Interacts with ATG9A. As to expression, highly expressed in testis, moderately in brain and pituitary gland. Expressed in several fetal tissues, including lung, brain, thymus and kidney. Expression is down-regulated in malignant prostate tissues.

It is found in the nucleus. Functionally, required for MAP kinase p38 (MAPK11, MAPK12, MAPK13 and/or MAPK14) activation during gastrulation. Required for down-regulation of E-cadherin during gastrulation by regulating E-cadherin protein level downstream from NCK-interacting kinase (NIK) and independently of the regulation of transcription by FGF signaling and Snail. Required for starvation-induced ATG9A trafficking during autophagy. The chain is Transcription factor SPT20 homolog (SUPT20H) from Homo sapiens (Human).